A 400-amino-acid chain; its full sequence is Aminomethyltransferase, mitochondrial (400 aa).

3 residues coordinate substrate: glutamate 221, arginine 250, and tyrosine 397.

The protein belongs to the GcvT family. As to quaternary structure, component of the glycine decarboxylase complex (GDC), which is composed of four proteins: P, T, L and H.

It localises to the mitochondrion. It carries out the reaction N(6)-[(R)-S(8)-aminomethyldihydrolipoyl]-L-lysyl-[protein] + (6S)-5,6,7,8-tetrahydrofolate = N(6)-[(R)-dihydrolipoyl]-L-lysyl-[protein] + (6R)-5,10-methylene-5,6,7,8-tetrahydrofolate + NH4(+). The glycine cleavage system (glycine decarboxylase complex) catalyzes the degradation of glycine. In Saccharomyces cerevisiae (strain ATCC 204508 / S288c) (Baker's yeast), this protein is Aminomethyltransferase, mitochondrial (GCV1).